Consider the following 465-residue polypeptide: Cysteine--tRNA ligase (465 aa).

Cysteine 27 lines the Zn(2+) pocket. The short motif at 29–39 is the 'HIGH' region element; that stretch reads PTVYNFFHIGN. Residues cysteine 207, histidine 232, and glutamate 236 each coordinate Zn(2+). Positions 264 to 268 match the 'KMSKS' region motif; it reads KMSKS. An ATP-binding site is contributed by lysine 267.

It belongs to the class-I aminoacyl-tRNA synthetase family. Monomer. It depends on Zn(2+) as a cofactor.

The protein localises to the cytoplasm. It carries out the reaction tRNA(Cys) + L-cysteine + ATP = L-cysteinyl-tRNA(Cys) + AMP + diphosphate. This is Cysteine--tRNA ligase from Clostridium kluyveri (strain NBRC 12016).